The following is a 910-amino-acid chain: Disease resistance protein RPH8A (910 aa).

Residues D15 to R57 adopt a coiled-coil conformation. The 314-residue stretch at R146–I459 folds into the NB-ARC domain. Residue G192–T199 participates in ATP binding.

This sequence belongs to the disease resistance NB-LRR family. RPP8/HRT subfamily.

Functionally, disease resistance protein. Resistance proteins guard the plant against pathogens that contain an appropriate avirulence protein via an indirect interaction with this avirulence protein. That triggers a defense system including the hypersensitive response, which restricts the pathogen growth. In contrast to RPP8, it does not specifically recognize the Emco5 avirulence protein from Hyaloperonospora parasitica. This chain is Disease resistance protein RPH8A (RPH8A), found in Arabidopsis thaliana (Mouse-ear cress).